The following is a 295-amino-acid chain: Aspartate carbamoyltransferase catalytic subunit (295 aa).

The carbamoyl phosphate site is built by arginine 49 and threonine 50. An L-aspartate-binding site is contributed by lysine 77. Carbamoyl phosphate-binding residues include arginine 99, histidine 127, and glutamine 130. Arginine 161 and arginine 212 together coordinate L-aspartate. The carbamoyl phosphate site is built by glycine 251 and proline 252.

Belongs to the aspartate/ornithine carbamoyltransferase superfamily. ATCase family. In terms of assembly, heterododecamer (2C3:3R2) of six catalytic PyrB chains organized as two trimers (C3), and six regulatory PyrI chains organized as three dimers (R2).

The enzyme catalyses carbamoyl phosphate + L-aspartate = N-carbamoyl-L-aspartate + phosphate + H(+). The protein operates within pyrimidine metabolism; UMP biosynthesis via de novo pathway; (S)-dihydroorotate from bicarbonate: step 2/3. In terms of biological role, catalyzes the condensation of carbamoyl phosphate and aspartate to form carbamoyl aspartate and inorganic phosphate, the committed step in the de novo pyrimidine nucleotide biosynthesis pathway. The chain is Aspartate carbamoyltransferase catalytic subunit from Campylobacter jejuni subsp. jejuni serotype O:2 (strain ATCC 700819 / NCTC 11168).